A 782-amino-acid polypeptide reads, in one-letter code: MSASGKKPGTKGTKRHRKITSCRECHRLKLKCDRVWPCENCKKRGIPNLCPNGILVSVSDKLIKLLLSRIDTLQNCVKSVSPNHESLIVSSDDQKIIDDIYEKFGEKPAEDTKDENRSQPIHDPDHPTLEDVAQMLGKLKVGSHGYFNYYGASSSRSCIPQQDPNSEEEDTFMQRPFLYPASSYNSALHWSHRIPNILNPSTLCDMLPVPQFAVRLMGLYFDNVGWSSHIIHRPSFEEACLNLYSAAPDRTNPQPQFLSLTYMVFCLGTLFTSPVLVRNRYSLAHEFFLRAQLCFDISVSGFTPSLDSVVAVMLMAQYSYFCDRLERTNFAWNCIGLAIRLAVAMGLHRDGEVFELSAFQLHMRRLIWSELLFFDRMLSMSLGRPFAISNDQTNVHEPSNVCDIQISSQSNCIPDPSYERTEASFTIFKAKLSKVIASVLDRAFRFTPPSYSEVEALTEQFKVLENELPDYMRISRDTPNLPPMVIIEQYSAKFLIQQALLYLHRPWFVRAATRKEEREHYKSSFNLCTSVSHELIHNLYSLMCLVPVEPLRWWVFRFHSLNAGIIQAAYALCFPNTDYALTAYNDLQYICRIFEHLKGGFMFSNKDYDFLIQLKSKVFNRFQLSSQGLTPEDLTEDVPFLHFNVPSSRPNSKSPDDSSMRAEKAAQLDGLGLSSDDLNTAQSENLPIYEQENPLLFDSLSWHVPKDDTRNDKSPLVPTWNADMMFEEEQKPIVPIDLSSMQDDQVSSLTTNEEFDPLSSFQASHSGSNFWTNMMNEMGIPK.

A DNA-binding region (zn(2)-C6 fungal-type) is located at residues 22-50; sequence CRECHRLKLKCDRVWPCENCKKRGIPNLC. Disordered regions lie at residues 105–126 and 645–665; these read GEKP…DPDH and VPSS…AEKA. The span at 654 to 665 shows a compositional bias: basic and acidic residues; the sequence is SPDDSSMRAEKA.

The protein localises to the nucleus. This is an uncharacterized protein from Schizosaccharomyces pombe (strain 972 / ATCC 24843) (Fission yeast).